Consider the following 156-residue polypeptide: Small ribosomal subunit protein uS7 (156 aa).

This sequence belongs to the universal ribosomal protein uS7 family. In terms of assembly, part of the 30S ribosomal subunit. Contacts proteins S9 and S11.

In terms of biological role, one of the primary rRNA binding proteins, it binds directly to 16S rRNA where it nucleates assembly of the head domain of the 30S subunit. Is located at the subunit interface close to the decoding center, probably blocks exit of the E-site tRNA. This Myxococcus xanthus (strain DK1622) protein is Small ribosomal subunit protein uS7.